A 657-amino-acid chain; its full sequence is Keratinocyte proline-rich protein (657 aa).

3 disordered regions span residues 285–320 (QGTY…SPPR), 425–493 (HPFP…PSPE), and 517–568 (QPVP…CGQP). Over residues 292–302 (TSQRRSQSTSR) the composition is skewed to low complexity. A compositionally biased stretch (basic and acidic residues) spans 434-444 (QHLDRSPESSR). The residue at position 442 (Ser442) is a Phosphoserine. 3 stretches are compositionally biased toward pro residues: residues 449 to 493 (VPAP…PSPE), 517 to 530 (QPVP…VPRP), and 539 to 561 (GPRP…PCSS).

The protein localises to the cytoplasm. This is Keratinocyte proline-rich protein from Mus musculus (Mouse).